A 186-amino-acid chain; its full sequence is uncharacterized protein (186 aa).

This is an uncharacterized protein from Saccharomyces cerevisiae (strain ATCC 204508 / S288c) (Baker's yeast).